Reading from the N-terminus, the 472-residue chain is Uronate isomerase (472 aa).

This sequence belongs to the metallo-dependent hydrolases superfamily. Uronate isomerase family.

It carries out the reaction D-glucuronate = D-fructuronate. The enzyme catalyses aldehydo-D-galacturonate = keto-D-tagaturonate. It functions in the pathway carbohydrate metabolism; pentose and glucuronate interconversion. In Nostoc punctiforme (strain ATCC 29133 / PCC 73102), this protein is Uronate isomerase.